The chain runs to 86 residues: MRLFLSLPVLVVVLLMILEGPGPAQGAPEALDTSSGLDKLKEFGNTLEDKVREFFNRVKESDIPAKTRNWFSETLQKVKEKLRIES.

A signal peptide spans 1-26 (MRLFLSLPVLVVVLLMILEGPGPAQG).

The protein belongs to the apolipoprotein C1 family.

It is found in the secreted. Functionally, inhibitor of lipoprotein binding to the low density lipoprotein (LDL) receptor, LDL receptor-related protein, and very low density lipoprotein (VLDL) receptor. Associates with high density lipoproteins (HDL) and the triacylglycerol-rich lipoproteins in the plasma and makes up about 10% of the protein of the VLDL and 2% of that of HDL. Appears to interfere directly with fatty acid uptake and is also the major plasma inhibitor of cholesteryl ester transfer protein (CETP). Binds free fatty acids and reduces their intracellular esterification. Modulates the interaction of APOE with beta-migrating VLDL and inhibits binding of beta-VLDL to the LDL receptor-related protein. This Ateles geoffroyi (Black-handed spider monkey) protein is Apolipoprotein C-I (APOC1).